A 412-amino-acid polypeptide reads, in one-letter code: Short-chain specific acyl-CoA dehydrogenase, mitochondrial (412 aa).

A mitochondrion-targeting transit peptide spans 1–24; it reads MAAALLARAGGSLGRALRARDWRR. Threonine 27 bears the Phosphothreonine mark. At lysine 51 the chain carries N6-acetyllysine; alternate. At lysine 51 the chain carries N6-succinyllysine; alternate. Lysine 72 carries the N6-acetyllysine modification. An N6-acetyllysine; alternate modification is found at lysine 129. Lysine 129 carries the N6-succinyllysine; alternate modification. FAD-binding positions include 152–161 and 185–187; these read FALSEPGNGS and WIT. Serine 161 contributes to the substrate binding site. At lysine 208 the chain carries N6-acetyllysine. Lysine 262 carries the N6-acetyllysine; alternate modification. Lysine 262 carries the N6-succinyllysine; alternate modification. 269–272 is a binding site for substrate; that stretch reads DMGR. Lysine 292 carries the post-translational modification N6-acetyllysine. Arginine 297 contacts FAD. An N6-acetyllysine; alternate modification is found at lysine 306. Lysine 306 is modified (N6-succinyllysine; alternate). 365–369 serves as a coordination point for FAD; the sequence is QILGG. Glutamate 392 (proton acceptor) is an active-site residue. 394–396 is an FAD binding site; the sequence is TSE.

It belongs to the acyl-CoA dehydrogenase family. As to quaternary structure, homotetramer. FAD serves as cofactor.

The protein resides in the mitochondrion matrix. The catalysed reaction is a short-chain 2,3-saturated fatty acyl-CoA + oxidized [electron-transfer flavoprotein] + H(+) = a short-chain (2E)-enoyl-CoA + reduced [electron-transfer flavoprotein]. It catalyses the reaction butanoyl-CoA + oxidized [electron-transfer flavoprotein] + H(+) = (2E)-butenoyl-CoA + reduced [electron-transfer flavoprotein]. The enzyme catalyses pentanoyl-CoA + oxidized [electron-transfer flavoprotein] + H(+) = (2E)-pentenoyl-CoA + reduced [electron-transfer flavoprotein]. It carries out the reaction hexanoyl-CoA + oxidized [electron-transfer flavoprotein] + H(+) = (2E)-hexenoyl-CoA + reduced [electron-transfer flavoprotein]. Its pathway is lipid metabolism; mitochondrial fatty acid beta-oxidation. Short-chain specific acyl-CoA dehydrogenase is one of the acyl-CoA dehydrogenases that catalyze the first step of mitochondrial fatty acid beta-oxidation, an aerobic process breaking down fatty acids into acetyl-CoA and allowing the production of energy from fats. The first step of fatty acid beta-oxidation consists in the removal of one hydrogen from C-2 and C-3 of the straight-chain fatty acyl-CoA thioester, resulting in the formation of trans-2-enoyl-CoA. Among the different mitochondrial acyl-CoA dehydrogenases, short-chain specific acyl-CoA dehydrogenase acts specifically on acyl-CoAs with saturated 4 to 6 carbons long primary chains. This Rattus norvegicus (Rat) protein is Short-chain specific acyl-CoA dehydrogenase, mitochondrial (Acads).